The following is a 243-amino-acid chain: MSKTHFGFESVEETEKAKKVAGVFHSVASNYDLMNDLMSAGMHRAWKAFTIAQANVRPGFKVLDIAAGTGDLTKSFAKAAGPTGEVWHTDINESMLRVGRDRLLDKGIVTPSLLCDAEKIPFPDNYFDVVTVAFGLRNMTHKDAALAEMRRVTKPGGRVMVLEFSKVWDPLKKAYDLYSFKVLPWLGDKFAKDAESYRYLAESIRMHPDQDTLKTMMEQAGLDAVKYYNLSGGVVALHLGTKY.

S-adenosyl-L-methionine contacts are provided by residues threonine 69, aspartate 90, and 116–117; that span reads DA.

The protein belongs to the class I-like SAM-binding methyltransferase superfamily. MenG/UbiE family.

It catalyses the reaction a 2-demethylmenaquinol + S-adenosyl-L-methionine = a menaquinol + S-adenosyl-L-homocysteine + H(+). The enzyme catalyses a 2-methoxy-6-(all-trans-polyprenyl)benzene-1,4-diol + S-adenosyl-L-methionine = a 5-methoxy-2-methyl-3-(all-trans-polyprenyl)benzene-1,4-diol + S-adenosyl-L-homocysteine + H(+). The protein operates within quinol/quinone metabolism; menaquinone biosynthesis; menaquinol from 1,4-dihydroxy-2-naphthoate: step 2/2. It participates in cofactor biosynthesis; ubiquinone biosynthesis. In terms of biological role, methyltransferase required for the conversion of demethylmenaquinol (DMKH2) to menaquinol (MKH2) and the conversion of 2-polyprenyl-6-methoxy-1,4-benzoquinol (DDMQH2) to 2-polyprenyl-3-methyl-6-methoxy-1,4-benzoquinol (DMQH2). The polypeptide is Ubiquinone/menaquinone biosynthesis C-methyltransferase UbiE (Burkholderia ambifaria (strain MC40-6)).